A 271-amino-acid polypeptide reads, in one-letter code: Thiazole synthase (271 aa).

Lysine 104 functions as the Schiff-base intermediate with DXP in the catalytic mechanism. Residues glycine 165, 192-193, and 214-215 contribute to the 1-deoxy-D-xylulose 5-phosphate site; these read AG and NT.

Belongs to the ThiG family. As to quaternary structure, homotetramer. Forms heterodimers with either ThiH or ThiS.

It is found in the cytoplasm. It carries out the reaction [ThiS sulfur-carrier protein]-C-terminal-Gly-aminoethanethioate + 2-iminoacetate + 1-deoxy-D-xylulose 5-phosphate = [ThiS sulfur-carrier protein]-C-terminal Gly-Gly + 2-[(2R,5Z)-2-carboxy-4-methylthiazol-5(2H)-ylidene]ethyl phosphate + 2 H2O + H(+). The protein operates within cofactor biosynthesis; thiamine diphosphate biosynthesis. Catalyzes the rearrangement of 1-deoxy-D-xylulose 5-phosphate (DXP) to produce the thiazole phosphate moiety of thiamine. Sulfur is provided by the thiocarboxylate moiety of the carrier protein ThiS. In vitro, sulfur can be provided by H(2)S. The polypeptide is Thiazole synthase (Burkholderia lata (strain ATCC 17760 / DSM 23089 / LMG 22485 / NCIMB 9086 / R18194 / 383)).